The chain runs to 600 residues: Proline--tRNA ligase (600 aa).

This sequence belongs to the class-II aminoacyl-tRNA synthetase family. ProS type 1 subfamily. In terms of assembly, homodimer.

Its subcellular location is the cytoplasm. The enzyme catalyses tRNA(Pro) + L-proline + ATP = L-prolyl-tRNA(Pro) + AMP + diphosphate. Functionally, catalyzes the attachment of proline to tRNA(Pro) in a two-step reaction: proline is first activated by ATP to form Pro-AMP and then transferred to the acceptor end of tRNA(Pro). As ProRS can inadvertently accommodate and process non-cognate amino acids such as alanine and cysteine, to avoid such errors it has two additional distinct editing activities against alanine. One activity is designated as 'pretransfer' editing and involves the tRNA(Pro)-independent hydrolysis of activated Ala-AMP. The other activity is designated 'posttransfer' editing and involves deacylation of mischarged Ala-tRNA(Pro). The misacylated Cys-tRNA(Pro) is not edited by ProRS. The polypeptide is Proline--tRNA ligase (Gloeothece citriformis (strain PCC 7424) (Cyanothece sp. (strain PCC 7424))).